A 401-amino-acid chain; its full sequence is Glutamyl-tRNA reductase (401 aa).

Substrate is bound by residues 45–48 (TCNR), S101, 106–108 (EDQ), and Q112. C46 functions as the Nucleophile in the catalytic mechanism. NADP(+) is bound at residue 177 to 182 (GYGDVG).

The protein belongs to the glutamyl-tRNA reductase family. Homodimer.

The catalysed reaction is (S)-4-amino-5-oxopentanoate + tRNA(Glu) + NADP(+) = L-glutamyl-tRNA(Glu) + NADPH + H(+). Its pathway is porphyrin-containing compound metabolism; protoporphyrin-IX biosynthesis; 5-aminolevulinate from L-glutamyl-tRNA(Glu): step 1/2. Functionally, catalyzes the NADPH-dependent reduction of glutamyl-tRNA(Glu) to glutamate 1-semialdehyde (GSA). The polypeptide is Glutamyl-tRNA reductase (Clostridium botulinum (strain Alaska E43 / Type E3)).